The sequence spans 124 residues: Small ribosomal subunit protein bS6 (124 aa).

Belongs to the bacterial ribosomal protein bS6 family.

Functionally, binds together with bS18 to 16S ribosomal RNA. This Chromobacterium violaceum (strain ATCC 12472 / DSM 30191 / JCM 1249 / CCUG 213 / NBRC 12614 / NCIMB 9131 / NCTC 9757 / MK) protein is Small ribosomal subunit protein bS6.